The chain runs to 139 residues: Transcription antitermination protein NusB (139 aa).

It belongs to the NusB family.

In terms of biological role, involved in transcription antitermination. Required for transcription of ribosomal RNA (rRNA) genes. Binds specifically to the boxA antiterminator sequence of the ribosomal RNA (rrn) operons. This chain is Transcription antitermination protein NusB, found in Sodalis glossinidius (strain morsitans).